The primary structure comprises 127 residues: Nitrogenase-stabilizing/protective protein NifW (127 aa).

The protein belongs to the NifW family. In terms of assembly, homotrimer; associates with NifD.

Its function is as follows. May protect the nitrogenase Fe-Mo protein from oxidative damage. The polypeptide is Nitrogenase-stabilizing/protective protein NifW (Rhizobium etli (strain ATCC 51251 / DSM 11541 / JCM 21823 / NBRC 15573 / CFN 42)).